Consider the following 933-residue polypeptide: 2-oxoglutarate dehydrogenase E1 component (933 aa).

It belongs to the alpha-ketoglutarate dehydrogenase family. In terms of assembly, homodimer. Part of the 2-oxoglutarate dehydrogenase (OGDH) complex composed of E1 (2-oxoglutarate dehydrogenase), E2 (dihydrolipoamide succinyltransferase) and E3 (dihydrolipoamide dehydrogenase); the complex contains multiple copies of the three enzymatic components (E1, E2 and E3). Requires thiamine diphosphate as cofactor.

It catalyses the reaction N(6)-[(R)-lipoyl]-L-lysyl-[protein] + 2-oxoglutarate + H(+) = N(6)-[(R)-S(8)-succinyldihydrolipoyl]-L-lysyl-[protein] + CO2. Its function is as follows. E1 component of the 2-oxoglutarate dehydrogenase (OGDH) complex which catalyzes the decarboxylation of 2-oxoglutarate, the first step in the conversion of 2-oxoglutarate to succinyl-CoA and CO(2). The sequence is that of 2-oxoglutarate dehydrogenase E1 component from Staphylococcus saprophyticus subsp. saprophyticus (strain ATCC 15305 / DSM 20229 / NCIMB 8711 / NCTC 7292 / S-41).